Consider the following 473-residue polypeptide: Photosystem II CP43 reaction center protein (473 aa).

A propeptide spanning residues 1 to 14 (MKTLYSLRRFYPVE) is cleaved from the precursor. T15 is subject to N-acetylthreonine. T15 bears the Phosphothreonine mark. The next 5 membrane-spanning stretches (helical) occupy residues 69–93 (LFEV…PHLA), 134–155 (LLGP…KDRN), 178–200 (KALY…RKIT), 255–275 (KPFA…LSYS), and 291–312 (WFNN…ASQA). Residue E367 participates in [CaMn4O5] cluster binding. The chain crosses the membrane as a helical span at residues 447-471 (RARAAAAGFEKGIDRDFEPVLSMTP).

It belongs to the PsbB/PsbC family. PsbC subfamily. In terms of assembly, PSII is composed of 1 copy each of membrane proteins PsbA, PsbB, PsbC, PsbD, PsbE, PsbF, PsbH, PsbI, PsbJ, PsbK, PsbL, PsbM, PsbT, PsbX, PsbY, PsbZ, Psb30/Ycf12, at least 3 peripheral proteins of the oxygen-evolving complex and a large number of cofactors. It forms dimeric complexes. It depends on Binds multiple chlorophylls and provides some of the ligands for the Ca-4Mn-5O cluster of the oxygen-evolving complex. It may also provide a ligand for a Cl- that is required for oxygen evolution. PSII binds additional chlorophylls, carotenoids and specific lipids. as a cofactor.

The protein localises to the plastid. It is found in the chloroplast thylakoid membrane. Its function is as follows. One of the components of the core complex of photosystem II (PSII). It binds chlorophyll and helps catalyze the primary light-induced photochemical processes of PSII. PSII is a light-driven water:plastoquinone oxidoreductase, using light energy to abstract electrons from H(2)O, generating O(2) and a proton gradient subsequently used for ATP formation. The sequence is that of Photosystem II CP43 reaction center protein from Vitis vinifera (Grape).